The chain runs to 226 residues: ATP synthase subunit C lysine N-methyltransferase (226 aa).

A helical transmembrane segment spans residues 35 to 55 (VIGGTLVALYAVATPFVAPAL). The interval 48–82 (TPFVAPALRKLCLPYVPATTTQVKNVLKMLRSRTG) is required for mitochondrial location.

The protein belongs to the ANT/ATPSC lysine N-methyltransferase family.

It localises to the mitochondrion membrane. Its function is as follows. Mitochondrial protein-lysine N-methyltransferase that promotes chronic pain. Involved in persistent inflammatory and neuropathic pain: methyltransferase activity in the mitochondria of sensory neurons promotes chronic pain via a pathway that depends on the production of reactive oxygen species (ROS) and on the engagement of spinal cord microglia. Protein-lysine N-methyltransferase activity is dependent on S-adenosyl-L-methionine. The polypeptide is ATP synthase subunit C lysine N-methyltransferase (atpsckmt) (Xenopus laevis (African clawed frog)).